Consider the following 424-residue polypeptide: MFTIITGAQFGDEGKGKIVDLLAKDYDIVARFQGGNNAGHTVRVGDEVYKLHLIPSGILLDARVLIGPGVVLNPEVLAEETAMFEKHGIKVDAEKLGVDAKTSIIMPYHIEMDGLREAARKTKIGTTKRGIGYAYIDKVARDEIRMAELVDKERFLKRLEELAPQKEKEIEAMGGDPKIVRDPFLIQKYLELGEQFASYVTDVSREINQALDEGKHVMAEAAQGTHLDVIHGTQKFVTSSSTIAGSACANLGVGPTRVGNVIAIVKAYITRVGEGPLPTELSGELGEKIQKAGGEFGTTTGRGRRCGWFDLPLLKKAIALNGYTEISLTKLDVLTGLEPLRICVGYKYKGEDLDYPPELTEDLWECSPVYEDLPGWETDLTEVKAYSELPENAQNYIKRLEELMKVPINYISVGPGREQTFKKE.

Residues 11–17 (GDEGKGK) and 39–41 (GHT) contribute to the GTP site. The Proton acceptor role is filled by Asp-12. Residues Asp-12 and Gly-39 each coordinate Mg(2+). IMP is bound by residues 12–15 (DEGK), 37–40 (NAGH), Thr-127, Arg-141, Gln-223, Thr-238, and Arg-302. His-40 serves as the catalytic Proton donor. 298–304 (TTTGRGR) contacts substrate. GTP contacts are provided by residues Arg-304, 330-332 (KLD), and 412-414 (SVG).

This sequence belongs to the adenylosuccinate synthetase family. In terms of assembly, homodimer. Requires Mg(2+) as cofactor.

The protein localises to the cytoplasm. It catalyses the reaction IMP + L-aspartate + GTP = N(6)-(1,2-dicarboxyethyl)-AMP + GDP + phosphate + 2 H(+). Its pathway is purine metabolism; AMP biosynthesis via de novo pathway; AMP from IMP: step 1/2. Plays an important role in the de novo pathway of purine nucleotide biosynthesis. Catalyzes the first committed step in the biosynthesis of AMP from IMP. The chain is Adenylosuccinate synthetase 2 from Methanosarcina acetivorans (strain ATCC 35395 / DSM 2834 / JCM 12185 / C2A).